The primary structure comprises 359 residues: Protein Wnt-8a (359 aa).

The first 25 residues, methionine 1–serine 25, serve as a signal peptide directing secretion. Cysteine 55 and cysteine 66 are oxidised to a cystine. Residue asparagine 104 is glycosylated (N-linked (GlcNAc...) asparagine). 10 cysteine pairs are disulfide-bonded: cysteine 105-cysteine 113, cysteine 115-cysteine 133, cysteine 181-cysteine 195, cysteine 183-cysteine 190, cysteine 260-cysteine 298, cysteine 276-cysteine 291, cysteine 295-cysteine 337, cysteine 313-cysteine 328, cysteine 315-cysteine 325, and cysteine 320-cysteine 321. The O-palmitoleoyl serine moiety is linked to residue serine 187. Asparagine 263 and asparagine 282 each carry an N-linked (GlcNAc...) asparagine glycan. Asparagine 348 carries an N-linked (GlcNAc...) asparagine glycan.

This sequence belongs to the Wnt family. In terms of processing, palmitoleoylation is required for efficient binding to frizzled receptors. Depalmitoleoylation leads to Wnt signaling pathway inhibition. Proteolytic processing by tiki1 and tiki2 promotes oxidation and formation of large disulfide-bond oligomers, leading to inactivation of wnt8. In terms of tissue distribution, expressed in the margin of the pregastrula embryo destined to be the future mesoderm.

The protein localises to the secreted. The protein resides in the extracellular space. It is found in the extracellular matrix. In terms of biological role, ligand for members of the frizzled family of seven transmembrane receptors. Required for mesoderm and neural ectoderm patterning during gastrulation. Involved in axis formation during embryonic development, via activation of canonical Wnt/CTNNB1 signaling. May be involved in the specification of the spatial patterns of expression of Gsc and other regulatory genes leading to the establishment of the embryonic axis. The sequence is that of Protein Wnt-8a (wnt8a) from Danio rerio (Zebrafish).